We begin with the raw amino-acid sequence, 156 residues long: Small ribosomal subunit protein uS7 (156 aa).

It belongs to the universal ribosomal protein uS7 family. In terms of assembly, part of the 30S ribosomal subunit. Contacts proteins S9 and S11.

One of the primary rRNA binding proteins, it binds directly to 16S rRNA where it nucleates assembly of the head domain of the 30S subunit. Is located at the subunit interface close to the decoding center, probably blocks exit of the E-site tRNA. This Carsonella ruddii (strain PV) protein is Small ribosomal subunit protein uS7.